The sequence spans 120 residues: Ribonuclease P protein component (120 aa).

This sequence belongs to the RnpA family. In terms of assembly, consists of a catalytic RNA component (M1 or rnpB) and a protein subunit.

The enzyme catalyses Endonucleolytic cleavage of RNA, removing 5'-extranucleotides from tRNA precursor.. In terms of biological role, RNaseP catalyzes the removal of the 5'-leader sequence from pre-tRNA to produce the mature 5'-terminus. It can also cleave other RNA substrates such as 4.5S RNA. The protein component plays an auxiliary but essential role in vivo by binding to the 5'-leader sequence and broadening the substrate specificity of the ribozyme. The sequence is that of Ribonuclease P protein component from Rickettsia bellii (strain RML369-C).